The primary structure comprises 350 residues: RNA 3'-terminal phosphate cyclase (350 aa).

Residues Gln-107 and 290-294 (FLGDQ) contribute to the ATP site. The active-site Tele-AMP-histidine intermediate is the His-316.

Belongs to the RNA 3'-terminal cyclase family. Type 1 subfamily.

It localises to the cytoplasm. The catalysed reaction is a 3'-end 3'-phospho-ribonucleotide-RNA + ATP = a 3'-end 2',3'-cyclophospho-ribonucleotide-RNA + AMP + diphosphate. Its function is as follows. Catalyzes the conversion of 3'-phosphate to a 2',3'-cyclic phosphodiester at the end of RNA. The mechanism of action of the enzyme occurs in 3 steps: (A) adenylation of the enzyme by ATP; (B) transfer of adenylate to an RNA-N3'P to produce RNA-N3'PP5'A; (C) and attack of the adjacent 2'-hydroxyl on the 3'-phosphorus in the diester linkage to produce the cyclic end product. The biological role of this enzyme is unknown but it is likely to function in some aspects of cellular RNA processing. The sequence is that of RNA 3'-terminal phosphate cyclase from Gloeothece citriformis (strain PCC 7424) (Cyanothece sp. (strain PCC 7424)).